The following is a 233-amino-acid chain: Small ribosomal subunit protein uS7m (233 aa).

Residues 1–28 (MAAPTAAGLCPRLRAWLPRLTQVRWSRY) constitute a mitochondrion transit peptide.

The protein belongs to the universal ribosomal protein uS7 family. Component of the mitochondrial ribosome small subunit (28S) which comprises a 12S rRNA and about 30 distinct proteins.

The protein localises to the mitochondrion. This Gallus gallus (Chicken) protein is Small ribosomal subunit protein uS7m (MRPS7).